The chain runs to 117 residues: Large ribosomal subunit protein eL22 (117 aa).

2 positions are modified to phosphoserine: serine 49 and serine 50.

The protein belongs to the eukaryotic ribosomal protein eL22 family. Component of the large ribosomal subunit (LSU). Mature yeast ribosomes consist of a small (40S) and a large (60S) subunit. The 40S small subunit contains 1 molecule of ribosomal RNA (18S rRNA) and at least 33 different proteins. The large 60S subunit contains 3 rRNA molecules (25S, 5.8S and 5S rRNA) and at least 46 different proteins.

The protein localises to the cytoplasm. The protein resides in the nucleus. Its subcellular location is the nucleolus. Component of the ribosome, a large ribonucleoprotein complex responsible for the synthesis of proteins in the cell. The small ribosomal subunit (SSU) binds messenger RNAs (mRNAs) and translates the encoded message by selecting cognate aminoacyl-transfer RNA (tRNA) molecules. The large subunit (LSU) contains the ribosomal catalytic site termed the peptidyl transferase center (PTC), which catalyzes the formation of peptide bonds, thereby polymerizing the amino acids delivered by tRNAs into a polypeptide chain. The nascent polypeptides leave the ribosome through a tunnel in the LSU and interact with protein factors that function in enzymatic processing, targeting, and the membrane insertion of nascent chains at the exit of the ribosomal tunnel. The sequence is that of Large ribosomal subunit protein eL22 (rpl22) from Schizosaccharomyces pombe (strain 972 / ATCC 24843) (Fission yeast).